Here is a 512-residue protein sequence, read N- to C-terminus: Ribose import ATP-binding protein RbsA 2 (512 aa).

ABC transporter domains are found at residues 7 to 242 (LEIR…VGRE) and 257 to 498 (LGEP…SGIG). 39–46 (GENGAGKS) serves as a coordination point for ATP.

Belongs to the ABC transporter superfamily. Ribose importer (TC 3.A.1.2.1) family. As to quaternary structure, the complex is composed of an ATP-binding protein (RbsA), two transmembrane proteins (RbsC) and a solute-binding protein (RbsB).

Its subcellular location is the cell inner membrane. It catalyses the reaction D-ribose(out) + ATP + H2O = D-ribose(in) + ADP + phosphate + H(+). Part of the ABC transporter complex RbsABC involved in ribose import. Responsible for energy coupling to the transport system. The protein is Ribose import ATP-binding protein RbsA 2 of Rhizobium meliloti (strain 1021) (Ensifer meliloti).